Here is a 727-residue protein sequence, read N- to C-terminus: Synaptic vesicle glycoprotein 2C (727 aa).

Positions 1-57 (MEDSYKDRTSLMKGAKDIAREVKKQTVKKVNQAVDRAQDEYTQRSYSRFQDEEDDDD) are interaction with SYT1. Topologically, residues 1–154 (MEDSYKDRTS…CGHGRFQWAL (154 aa)) are cytoplasmic. Disordered regions lie at residues 24–84 (KQTV…GHDE) and 109–128 (VGQP…SERR). Phosphoserine is present on residues S75 and S76. T79 bears the Phosphothreonine mark. Residues 113 to 128 (KGDEYKDRRELESERR) are compositionally biased toward basic and acidic residues. The helical transmembrane segment at 155 to 175 (FFVLGMALMADGVEVFVVGFV) threads the bilayer. Residues 176 to 191 (LPSAETDLCIPNSGSG) lie on the Extracellular side of the membrane. The chain crosses the membrane as a helical span at residues 192 to 212 (WLGSIVYLGMMVGAFFWGGLA). Over 213 to 226 (DKVGRKQSLLICMS) the chain is Cytoplasmic. The chain crosses the membrane as a helical span at residues 227–247 (VNGFFAFLSSFVQGYGFFLFC). Residue R248 is a topological domain, extracellular. The helical transmembrane segment at 249-269 (LLSGFGIGGAIPTVFSYFAEV) threads the bilayer. Residues 270 to 280 (LAREKRGEHLS) lie on the Cytoplasmic side of the membrane. Residues 281–301 (WLCMFWMIGGIYASAMAWAII) traverse the membrane as a helical segment. Topologically, residues 302–320 (PHYGWSFSMGSAYQFHSWR) are extracellular. The helical transmembrane segment at 321–341 (VFVIVCALPCVSSVVALTFMP) threads the bilayer. At 342–437 (ESPRFLLEVG…PVRDNTIKLT (96 aa)) the chain is on the cytoplasmic side. A helical membrane pass occupies residues 438–458 (IVWFTLSFGYYGLSVWFPDVI). Residues 459 to 578 (KPLQSDEYAL…CQITFDDDYS (120 aa)) lie on the Extracellular side of the membrane. Y466 is modified (phosphotyrosine). N480, N484, N534, N559, and N565 each carry an N-linked (GlcNAc...) asparagine glycan. Residues 519–563 (SCTFEDVTSVNTYFKNCTFIDTVFDNTDFEPYKFIDSEFKNCSFF) are (Microbial infection) C.botulinum neurotoxin type A-binding. A helical transmembrane segment spans residues 579–599 (AYWIYFVNFLGTLAVLPGNIV). At 600–609 (SALLMDRIGR) the chain is on the cytoplasmic side. A helical transmembrane segment spans residues 610-630 (LTMLGGSMVLSGISCFFLWFG). At 631 to 636 (TSESMM) the chain is on the extracellular side. A helical transmembrane segment spans residues 637–657 (IGMLCLYNGLTISAWNSLDVV). Over 658–669 (TVELYPTDRRAT) the chain is Cytoplasmic. A helical membrane pass occupies residues 670–690 (GFGFLNALCKAAAVLGNLIFG). At 691 to 698 (SLVSITKS) the chain is on the extracellular side. The helical transmembrane segment at 699-719 (IPILLASTVLVCGGLVGLCLP) threads the bilayer. Topologically, residues 720 to 727 (DTRTQVLM) are cytoplasmic.

The protein belongs to the major facilitator superfamily. As to quaternary structure, interacts with SYT1 in a calcium-dependent manner. (Microbial infection) Interacts with C.botulinum neurotoxin type A1 and type A2 (BoNT/A, botA). Interaction is improved by glycosylation of SV2. N-glycosylated. Upon expression in a kidney cell line the most abundant glycan on Asn-534 is GlcNAc(3)Hex(5), while on Asn-559 and Asn-565 the most abundant glycan is GlcNAc2Fuc1Man3GlcNAc3Gal3. Both Asn-559 and Asn-565 have a high degree of glycan heterogeneity.

The protein localises to the cytoplasmic vesicle. It localises to the secretory vesicle. Its subcellular location is the synaptic vesicle membrane. In terms of biological role, plays a role in the control of regulated secretion in neural and endocrine cells, enhancing selectively low-frequency neurotransmission. Positively regulates vesicle fusion by maintaining the readily releasable pool of secretory vesicles. (Microbial infection) Receptor for C.botulinum neurotoxin type A (BoNT/A, botA); the toxin probably binds via extracellular loop 4. Recognition by BoNT/A relies on both protein-protein and protein-N-glycosylation; glycosylation of Asn-559 increases its affinity for BoNT/A. Also serves as a receptor for the closely related C.botulinum neurotoxin type A2; glycosylation is not essential but enhances the interaction. Its function is as follows. (Microbial infection) Possible receptor for C.botulinum neurotoxin type D (BoNT/D, botD); note that type D does not usually infect humans. This is Synaptic vesicle glycoprotein 2C (SV2C) from Homo sapiens (Human).